A 287-amino-acid chain; its full sequence is CTD small phosphatase-like protein 3 (287 aa).

The FCP1 homology domain occupies 60–219 (RSTPEYTLVL…LKLCSFLEAI (160 aa)).

Belongs to the CTDSPL2 family.

Functionally, probable phosphatase. The chain is CTD small phosphatase-like protein 3 (scpl-3) from Caenorhabditis elegans.